The sequence spans 268 residues: tRNA (guanine-N(1)-)-methyltransferase (268 aa).

S-adenosyl-L-methionine contacts are provided by residues Gly-110 and Ile-129–Met-134. The segment at Trp-246–Ser-268 is disordered.

The protein belongs to the RNA methyltransferase TrmD family. Homodimer.

Its subcellular location is the cytoplasm. The enzyme catalyses guanosine(37) in tRNA + S-adenosyl-L-methionine = N(1)-methylguanosine(37) in tRNA + S-adenosyl-L-homocysteine + H(+). Functionally, specifically methylates guanosine-37 in various tRNAs. This is tRNA (guanine-N(1)-)-methyltransferase from Deinococcus deserti (strain DSM 17065 / CIP 109153 / LMG 22923 / VCD115).